Consider the following 412-residue polypeptide: Glucose/galactose transporter (412 aa).

A run of 11 helical transmembrane segments spans residues 21 to 41, 62 to 82, 90 to 110, 113 to 133, 158 to 178, 192 to 212, 239 to 259, 310 to 330, 331 to 351, 363 to 383, and 388 to 408; these read YGFA…ITCL, LIQF…GQLV, GIVV…PAAS, VYAL…ILQV, FNSL…LSAA, FPYL…AILK, LGAI…SFLV, AFVA…IAMW, SVLA…SLAL, GILC…GALA, and IHLA…YGLI.

The protein belongs to the major facilitator superfamily. FHS transporter (TC 2.A.1.7) family.

The protein resides in the cell inner membrane. Functionally, intake of glucose and galactose. The polypeptide is Glucose/galactose transporter (gluP) (Brucella abortus (strain 2308)).